A 507-amino-acid polypeptide reads, in one-letter code: ATP synthase subunit alpha, chloroplastic (507 aa).

170 to 177 serves as a coordination point for ATP; sequence GDRQTGKT.

This sequence belongs to the ATPase alpha/beta chains family. F-type ATPases have 2 components, CF(1) - the catalytic core - and CF(0) - the membrane proton channel. CF(1) has five subunits: alpha(3), beta(3), gamma(1), delta(1), epsilon(1). CF(0) has four main subunits: a, b, b' and c.

It is found in the plastid. The protein localises to the chloroplast thylakoid membrane. It catalyses the reaction ATP + H2O + 4 H(+)(in) = ADP + phosphate + 5 H(+)(out). Produces ATP from ADP in the presence of a proton gradient across the membrane. The alpha chain is a regulatory subunit. The polypeptide is ATP synthase subunit alpha, chloroplastic (Anthoceros angustus (Hornwort)).